The chain runs to 244 residues: Lipoprotein-releasing system ATP-binding protein LolD (244 aa).

One can recognise an ABC transporter domain in the interval 19–244; it reads IRAEALAKTY…KLRELAPSAV (226 aa). 55–62 is a binding site for ATP; sequence GASGAGKS.

Belongs to the ABC transporter superfamily. Lipoprotein translocase (TC 3.A.1.125) family. In terms of assembly, the complex is composed of two ATP-binding proteins (LolD) and two transmembrane proteins (LolC and LolE).

It is found in the cell inner membrane. Part of the ABC transporter complex LolCDE involved in the translocation of mature outer membrane-directed lipoproteins, from the inner membrane to the periplasmic chaperone, LolA. Responsible for the formation of the LolA-lipoprotein complex in an ATP-dependent manner. The chain is Lipoprotein-releasing system ATP-binding protein LolD from Xanthomonas euvesicatoria pv. vesicatoria (strain 85-10) (Xanthomonas campestris pv. vesicatoria).